We begin with the raw amino-acid sequence, 185 residues long: Ribosome-recycling factor (185 aa).

Belongs to the RRF family.

The protein resides in the cytoplasm. Functionally, responsible for the release of ribosomes from messenger RNA at the termination of protein biosynthesis. May increase the efficiency of translation by recycling ribosomes from one round of translation to another. The protein is Ribosome-recycling factor of Acidothermus cellulolyticus (strain ATCC 43068 / DSM 8971 / 11B).